Here is a 166-residue protein sequence, read N- to C-terminus: Putative glycine-rich cell wall structural protein 1 (166 aa).

The N-terminal stretch at 1–23 is a signal peptide; it reads MARKVIALAFLLLLTISLSKSNA. 2 R2; Tyr-rich repeats span residues 56–62 and 93–99; these read GYGYNYG and GYGYGYG. Positions 105–125 are disordered; the sequence is AQGQGSGGGGGGGGGGGGGGS. Residues 132–138 form an R2; Tyr-rich repeat; it reads GYGYGYG. A compositionally biased stretch (gly residues) spans 144-160; the sequence is GGGGGGDGGGGGGGGSA. The segment at 144 to 166 is disordered; sequence GGGGGGDGGGGGGGGSAYVGRHE.

It is found in the secreted. The protein localises to the cell wall. In terms of biological role, responsible for plasticity of the cell wall. This is Putative glycine-rich cell wall structural protein 1 (GRP-1) from Oryza sativa subsp. japonica (Rice).